The following is a 194-amino-acid chain: 7-methyl-GTP pyrophosphatase (194 aa).

Catalysis depends on Asp-69, which acts as the Proton acceptor.

Belongs to the Maf family. YceF subfamily. A divalent metal cation is required as a cofactor.

It localises to the cytoplasm. The enzyme catalyses N(7)-methyl-GTP + H2O = N(7)-methyl-GMP + diphosphate + H(+). Its function is as follows. Nucleoside triphosphate pyrophosphatase that hydrolyzes 7-methyl-GTP (m(7)GTP). May have a dual role in cell division arrest and in preventing the incorporation of modified nucleotides into cellular nucleic acids. This Shigella flexneri protein is 7-methyl-GTP pyrophosphatase (yceF).